The following is a 485-amino-acid chain: Glucose-6-phosphate 1-dehydrogenase (485 aa).

NADP(+) contacts are provided by residues arginine 46, 89–90 (DI), and lysine 144. Substrate is bound by residues histidine 174, lysine 178, glutamate 212, and aspartate 231. Catalysis depends on histidine 236, which acts as the Proton acceptor. Residue lysine 334 coordinates substrate.

The protein belongs to the glucose-6-phosphate dehydrogenase family.

It catalyses the reaction D-glucose 6-phosphate + NADP(+) = 6-phospho-D-glucono-1,5-lactone + NADPH + H(+). Its pathway is carbohydrate degradation; pentose phosphate pathway; D-ribulose 5-phosphate from D-glucose 6-phosphate (oxidative stage): step 1/3. In terms of biological role, catalyzes the oxidation of glucose 6-phosphate to 6-phosphogluconolactone. The chain is Glucose-6-phosphate 1-dehydrogenase from Zymomonas mobilis subsp. mobilis (strain ATCC 31821 / ZM4 / CP4).